A 343-amino-acid polypeptide reads, in one-letter code: Isopentenyl-diphosphate delta-isomerase (343 aa).

Substrate is bound at residue 9-10 (RK). Residues Ser66, 67–69 (SMT), Ser98, and Asn126 contribute to the FMN site. 98 to 100 (SQR) serves as a coordination point for substrate. Residue Gln161 coordinates substrate. Glu162 is a Mg(2+) binding site. FMN-binding positions include Lys193, Thr223, 273-275 (GIR), and 294-295 (AA).

It belongs to the IPP isomerase type 2 family. As to quaternary structure, homooctamer. Dimer of tetramers. FMN serves as cofactor. Requires NADPH as cofactor. The cofactor is Mg(2+).

It is found in the cytoplasm. The catalysed reaction is isopentenyl diphosphate = dimethylallyl diphosphate. In terms of biological role, involved in the biosynthesis of isoprenoids. Catalyzes the 1,3-allylic rearrangement of the homoallylic substrate isopentenyl (IPP) to its allylic isomer, dimethylallyl diphosphate (DMAPP). This chain is Isopentenyl-diphosphate delta-isomerase, found in Hydrogenovibrio crunogenus (strain DSM 25203 / XCL-2) (Thiomicrospira crunogena).